The primary structure comprises 376 residues: MDKNFEGKQFTGVIKFTPPLYKQRYEFVQDLVRKYEPKKVADLGCADCTLLWMLKFCSCIEVLAGLDICETVMKEKMHRLTPLPADYLEPSERSLIVTLHQGSVAHKDPCMLGFDLVTCIELIEHLQESELEKFPEVVFGFMAPNMVVISTPNSEFNTLLPGVTVFRHPDHKFEWDRAQFQSWAQDTAERYEYSVEFTGVGSPPTGMEDVGFCTQIGVFVKKYPQTREPVQREKPTEAAYKTVFKAVYPSLKDEKYLQNAVVSEVMFRAQLIKRSLLDHLLSECEEYNDDPTERKLKLQCSVNCFSEDVETLAVEKSTEPFVSGNVIYIPLRKIFSVPKVNQLCGTFEKFCRLITGKVTLNSDSSALMLDTENEEN.

The S-adenosyl-L-methionine site is built by threonine 49, aspartate 67, and serine 103. Residues glutamate 121, glutamate 124, histidine 125, and histidine 171 each contribute to the Mg(2+) site.

This sequence belongs to the methyltransferase superfamily. HEN1 family. Requires Mg(2+) as cofactor.

It is found in the cytoplasm. It carries out the reaction small RNA 3'-end nucleotide + S-adenosyl-L-methionine = small RNA 3'-end 2'-O-methylnucleotide + S-adenosyl-L-homocysteine + H(+). Methyltransferase that adds a 2'-O-methyl group at the 3'-end of piRNAs, a class of 24 to 30 nucleotide RNAs that are generated by a Dicer-independent mechanism and are primarily derived from transposons and other repeated sequence elements. This probably protects the 3'-end of piRNAs from uridylation activity and subsequent degradation. Stabilization of piRNAs is essential for gametogenesis. The protein is Small RNA 2'-O-methyltransferase (HENMT1) of Gallus gallus (Chicken).